Reading from the N-terminus, the 261-residue chain is Small ribosomal subunit protein eS1B (261 aa).

Residues 1 to 18 (MTLGKNKRISKGGKRGKK) show a composition bias toward basic residues. The segment at 1–23 (MTLGKNKRISKGGKRGKKKAQET) is disordered.

The protein belongs to the eukaryotic ribosomal protein eS1 family. Component of the small ribosomal subunit. Mature ribosomes consist of a small (40S) and a large (60S) subunit. The 40S subunit contains about 33 different proteins and 1 molecule of RNA (18S). The 60S subunit contains about 49 different proteins and 3 molecules of RNA (25S, 5.8S and 5S).

Its subcellular location is the cytoplasm. The protein is Small ribosomal subunit protein eS1B of Trypanosoma cruzi (strain CL Brener).